The primary structure comprises 491 residues: 3-octaprenyl-4-hydroxybenzoate carboxy-lyase (491 aa).

Asparagine 172 lines the Mn(2+) pocket. Prenylated FMN is bound by residues 175–177 (IYR), 189–191 (RWL), and 194–195 (RG). Mn(2+) is bound at residue glutamate 238. Aspartate 287 (proton donor) is an active-site residue.

Belongs to the UbiD family. In terms of assembly, homohexamer. It depends on prenylated FMN as a cofactor. The cofactor is Mn(2+).

It localises to the cell membrane. The catalysed reaction is a 4-hydroxy-3-(all-trans-polyprenyl)benzoate + H(+) = a 2-(all-trans-polyprenyl)phenol + CO2. The protein operates within cofactor biosynthesis; ubiquinone biosynthesis. Its function is as follows. Catalyzes the decarboxylation of 3-octaprenyl-4-hydroxy benzoate to 2-octaprenylphenol, an intermediate step in ubiquinone biosynthesis. This chain is 3-octaprenyl-4-hydroxybenzoate carboxy-lyase, found in Alcanivorax borkumensis (strain ATCC 700651 / DSM 11573 / NCIMB 13689 / SK2).